The following is a 468-amino-acid chain: Uronate isomerase (468 aa).

Belongs to the metallo-dependent hydrolases superfamily. Uronate isomerase family.

The enzyme catalyses D-glucuronate = D-fructuronate. It carries out the reaction aldehydo-D-galacturonate = keto-D-tagaturonate. It functions in the pathway carbohydrate metabolism; pentose and glucuronate interconversion. The polypeptide is Uronate isomerase (Endomicrobium trichonymphae).